A 134-amino-acid chain; its full sequence is Profilin-3 (134 aa).

Cys13 and Cys118 are oxidised to a cystine. Positions 84–100 match the Involved in PIP2 interaction motif; it reads AVIRGKKGSGGITIKKT. At Thr114 the chain carries Phosphothreonine.

The protein belongs to the profilin family. As to quaternary structure, occurs in many kinds of cells as a complex with monomeric actin in a 1:1 ratio. In terms of processing, phosphorylated by MAP kinases.

It is found in the cytoplasm. It localises to the cytoskeleton. Its function is as follows. Binds to actin and affects the structure of the cytoskeleton. At high concentrations, profilin prevents the polymerization of actin, whereas it enhances it at low concentrations. This chain is Profilin-3, found in Olea europaea (Common olive).